Here is a 245-residue protein sequence, read N- to C-terminus: Ubiquinone biosynthesis O-methyltransferase (245 aa).

The S-adenosyl-L-methionine site is built by Arg-44, Gly-64, Asp-85, and Met-129.

Belongs to the methyltransferase superfamily. UbiG/COQ3 family.

The catalysed reaction is a 3-demethylubiquinol + S-adenosyl-L-methionine = a ubiquinol + S-adenosyl-L-homocysteine + H(+). It catalyses the reaction a 3-(all-trans-polyprenyl)benzene-1,2-diol + S-adenosyl-L-methionine = a 2-methoxy-6-(all-trans-polyprenyl)phenol + S-adenosyl-L-homocysteine + H(+). It participates in cofactor biosynthesis; ubiquinone biosynthesis. In terms of biological role, O-methyltransferase that catalyzes the 2 O-methylation steps in the ubiquinone biosynthetic pathway. This is Ubiquinone biosynthesis O-methyltransferase from Proteus mirabilis (strain HI4320).